The following is a 641-amino-acid chain: UPF0329 protein ECU11_0030 (641 aa).

Basic and acidic residues predominate over residues 358–387 (RQRKREEETERSVKELVGDEEKAKSKEEKA). The interval 358 to 444 (RQRKREEETE…KGGKKKSKGG (87 aa)) is disordered. Residues 435 to 444 (KGGKKKSKGG) are compositionally biased toward basic residues.

This sequence belongs to the UPF0329 family.

The protein is UPF0329 protein ECU11_0030 of Encephalitozoon cuniculi (strain GB-M1) (Microsporidian parasite).